The primary structure comprises 212 residues: Large ribosomal subunit protein uL3 (212 aa).

Glutamine 153 is modified (N5-methylglutamine).

It belongs to the universal ribosomal protein uL3 family. Part of the 50S ribosomal subunit. Forms a cluster with proteins L14 and L19. Post-translationally, methylated by PrmB.

Its function is as follows. One of the primary rRNA binding proteins, it binds directly near the 3'-end of the 23S rRNA, where it nucleates assembly of the 50S subunit. The polypeptide is Large ribosomal subunit protein uL3 (Acinetobacter baylyi (strain ATCC 33305 / BD413 / ADP1)).